The sequence spans 985 residues: Eukaryotic translation initiation factor 4E transporter (985 aa).

Residues 1–24 (MDRRSMGETESGDAFLDLKKPPAS) form a disordered region. Phosphoserine is present on Ser5. Residues 30–36 (YTKEELL) carry the YXXXXLphi motif motif. 6 positions are modified to phosphoserine: Ser74, Ser78, Ser115, Ser120, Ser136, and Ser138. Residues 131–161 (VSSRRSGSPLEKDSDGLRLLGGRRIGSGRII) are interaction with CSDE1. The short motif at 195-211 (RREFGDSKRVFGERRRN) is the Nuclear localization signal element. Positions 208–230 (RRRNDSYTEEEPEWFSAGPTSQS) are disordered. Residues 219-240 (PEWFSAGPTSQSETIELTGFDD) form an interaction with DDX6 region. Residues Ser301, Ser345, Ser353, and Ser374 each carry the phosphoserine modification. Lys410 participates in a covalent cross-link: Glycyl lysine isopeptide (Lys-Gly) (interchain with G-Cter in SUMO2). Ser417 is subject to Phosphoserine. Positions 438-447 (VEAGLKGLKV) match the Nuclear export signal motif. Residues 448 to 490 (DQQVKNSTPFMAEHLEETLSAVTNNRQLKKDGDMTAFNKLVST) are interaction with LSM14A. Residue Lys486 is modified to N6-acetyllysine. 3 positions are modified to phosphoserine: Ser513, Ser564, and Ser587. The Nuclear export signal signature appears at 613-638 (ITAQMSQLELQQAALEGLALPHDLAV). Disordered stretches follow at residues 664–693 (QQRVTKSPAPVHRGNSSSPAPAASITSMLS) and 707–803 (ESKE…PTTP). A Phosphoserine modification is found at Ser693. The interaction with PATL1 stretch occupies residues 695 to 713 (SFTPTSVIRKMYESKEKSK). 2 stretches are compositionally biased toward basic and acidic residues: residues 707–717 (ESKEKSKEEPA) and 725–735 (DSKEDTQKASE). Over residues 736-746 (ENLLSSSSVPS) the composition is skewed to low complexity. Ser752 bears the Phosphoserine mark. Positions 754–776 (TTNSKLSALQRSSCSTPLSQANR) are enriched in polar residues. 2 positions are modified to phosphoserine: Ser920 and Ser951. The disordered stretch occupies residues 922 to 953 (QTTPQNVPSRSGLPHMHSQLEHRPSQRSSSPV). Residues 940–985 (QLEHRPSQRSSSPVGLAKWFGSDVLQQPLPSMPAKVISVDELEYRQ) form an interaction with LSM14A region.

The protein belongs to the 4E-T/EIF4E-T family. As to quaternary structure, interacts (via YXXXXLphi motif) with EIF4E. Interacts (via YXXXXLphi motif) with EIF4E2. Interacts with DDX6. Interacts with CSDE1/UNR. Interacts with CNOT1; promoting association with the CCR4-NOT complex. Interacts with LSM14A; promoting EIF4ENIF1 localization to P-bodies. Interacts with PATL1. Interacts with importin beta only in the presence of importin alpha, suggesting a direct interaction with importin alpha. Interacts with APOBEC3G in an RNA-dependent manner. Post-translationally, phosphorylation by MAPK8/JNK1 and or MAPK9/JNK2 in response to oxidative stress promotes P-body assembly. Phosphorylated during meiotic maturation. Widely expressed.

The protein resides in the cytoplasm. It is found in the P-body. It localises to the nucleus. The protein localises to the PML body. Its subcellular location is the nucleus speckle. In terms of biological role, EIF4E-binding protein that regulates translation and stability of mRNAs in processing bodies (P-bodies). Plays a key role in P-bodies to coordinate the storage of translationally inactive mRNAs in the cytoplasm and prevent their degradation. Acts as a binding platform for multiple RNA-binding proteins: promotes deadenylation of mRNAs via its interaction with the CCR4-NOT complex, and blocks decapping via interaction with eIF4E (EIF4E and EIF4E2), thereby protecting deadenylated and repressed mRNAs from degradation. Component of a multiprotein complex that sequesters and represses translation of proneurogenic factors during neurogenesis. Promotes miRNA-mediated translational repression. Required for the formation of P-bodies. Involved in mRNA translational repression mediated by the miRNA effector TNRC6B by protecting TNRC6B-targeted mRNAs from decapping and subsequent decay. Also acts as a nucleoplasmic shuttling protein, which mediates the nuclear import of EIF4E and DDX6 by a piggy-back mechanism. In Homo sapiens (Human), this protein is Eukaryotic translation initiation factor 4E transporter.